A 361-amino-acid polypeptide reads, in one-letter code: Phosphoserine aminotransferase (361 aa).

Residue Arg43 participates in L-glutamate binding. Pyridoxal 5'-phosphate-binding positions include 77 to 78 (AS), Trp103, Thr153, Asp172, and Gln195. At Lys196 the chain carries N6-(pyridoxal phosphate)lysine. 237-238 (NT) lines the pyridoxal 5'-phosphate pocket.

The protein belongs to the class-V pyridoxal-phosphate-dependent aminotransferase family. SerC subfamily. Homodimer. Pyridoxal 5'-phosphate serves as cofactor.

It is found in the cytoplasm. It carries out the reaction O-phospho-L-serine + 2-oxoglutarate = 3-phosphooxypyruvate + L-glutamate. It catalyses the reaction 4-(phosphooxy)-L-threonine + 2-oxoglutarate = (R)-3-hydroxy-2-oxo-4-phosphooxybutanoate + L-glutamate. It participates in amino-acid biosynthesis; L-serine biosynthesis; L-serine from 3-phospho-D-glycerate: step 2/3. The protein operates within cofactor biosynthesis; pyridoxine 5'-phosphate biosynthesis; pyridoxine 5'-phosphate from D-erythrose 4-phosphate: step 3/5. In terms of biological role, catalyzes the reversible conversion of 3-phosphohydroxypyruvate to phosphoserine and of 3-hydroxy-2-oxo-4-phosphonooxybutanoate to phosphohydroxythreonine. The protein is Phosphoserine aminotransferase of Desulfotalea psychrophila (strain LSv54 / DSM 12343).